Here is a 200-residue protein sequence, read N- to C-terminus: Holliday junction branch migration complex subunit RuvA (200 aa).

The tract at residues 1 to 64 (MFAYFKGSLV…EDALQLYGFF (64 aa)) is domain I. Positions 65 to 143 (KEEERQLFRL…KLPLVTPAAG (79 aa)) are domain II. The tract at residues 143-147 (GKAAM) is flexible linker. A domain III region spans residues 148–200 (PSHHVKDDAVHALVTLGFSRLLAQKAVSALLEEKPEQSVEEVIKYALATIHNS).

It belongs to the RuvA family. As to quaternary structure, homotetramer. Forms an RuvA(8)-RuvB(12)-Holliday junction (HJ) complex. HJ DNA is sandwiched between 2 RuvA tetramers; dsDNA enters through RuvA and exits via RuvB. An RuvB hexamer assembles on each DNA strand where it exits the tetramer. Each RuvB hexamer is contacted by two RuvA subunits (via domain III) on 2 adjacent RuvB subunits; this complex drives branch migration. In the full resolvosome a probable DNA-RuvA(4)-RuvB(12)-RuvC(2) complex forms which resolves the HJ.

It is found in the cytoplasm. Its function is as follows. The RuvA-RuvB-RuvC complex processes Holliday junction (HJ) DNA during genetic recombination and DNA repair, while the RuvA-RuvB complex plays an important role in the rescue of blocked DNA replication forks via replication fork reversal (RFR). RuvA specifically binds to HJ cruciform DNA, conferring on it an open structure. The RuvB hexamer acts as an ATP-dependent pump, pulling dsDNA into and through the RuvAB complex. HJ branch migration allows RuvC to scan DNA until it finds its consensus sequence, where it cleaves and resolves the cruciform DNA. In Chlorobium phaeobacteroides (strain DSM 266 / SMG 266 / 2430), this protein is Holliday junction branch migration complex subunit RuvA.